A 201-amino-acid chain; its full sequence is Small ribosomal subunit protein uS4c (201 aa).

One can recognise an S4 RNA-binding domain in the interval 89 to 149 (MRLDNILFRL…DEQKSRALIQ (61 aa)).

This sequence belongs to the universal ribosomal protein uS4 family. Part of the 30S ribosomal subunit. Contacts protein S5. The interaction surface between S4 and S5 is involved in control of translational fidelity.

It localises to the plastid. It is found in the chloroplast. In terms of biological role, one of the primary rRNA binding proteins, it binds directly to 16S rRNA where it nucleates assembly of the body of the 30S subunit. Functionally, with S5 and S12 plays an important role in translational accuracy. This Coffea arabica (Arabian coffee) protein is Small ribosomal subunit protein uS4c (rps4).